Reading from the N-terminus, the 266-residue chain is 4-hydroxy-tetrahydrodipicolinate reductase (266 aa).

Gly10 to Met15 provides a ligand contact to NAD(+). Residue Lys38 coordinates NADP(+). NAD(+)-binding positions include Gly99–Thr101 and Ala125–Phe128. His155 acts as the Proton donor/acceptor in catalysis. His156 contributes to the (S)-2,3,4,5-tetrahydrodipicolinate binding site. Lys159 acts as the Proton donor in catalysis. Position 165-166 (Gly165–Thr166) interacts with (S)-2,3,4,5-tetrahydrodipicolinate.

The protein belongs to the DapB family.

The protein resides in the cytoplasm. The catalysed reaction is (S)-2,3,4,5-tetrahydrodipicolinate + NAD(+) + H2O = (2S,4S)-4-hydroxy-2,3,4,5-tetrahydrodipicolinate + NADH + H(+). It catalyses the reaction (S)-2,3,4,5-tetrahydrodipicolinate + NADP(+) + H2O = (2S,4S)-4-hydroxy-2,3,4,5-tetrahydrodipicolinate + NADPH + H(+). Its pathway is amino-acid biosynthesis; L-lysine biosynthesis via DAP pathway; (S)-tetrahydrodipicolinate from L-aspartate: step 4/4. Catalyzes the conversion of 4-hydroxy-tetrahydrodipicolinate (HTPA) to tetrahydrodipicolinate. This chain is 4-hydroxy-tetrahydrodipicolinate reductase, found in Bacillus cytotoxicus (strain DSM 22905 / CIP 110041 / 391-98 / NVH 391-98).